The sequence spans 451 residues: Probable gamma-glutamyl phosphate reductase (451 aa).

It belongs to the gamma-glutamyl phosphate reductase family.

The enzyme catalyses L-glutamate 5-semialdehyde + phosphate + NADP(+) = L-glutamyl 5-phosphate + NADPH + H(+). It functions in the pathway amino-acid biosynthesis; L-proline biosynthesis; L-glutamate 5-semialdehyde from L-glutamate: step 2/2. In terms of biological role, catalyzes the NADPH dependent reduction of L-gamma-glutamyl 5-phosphate into L-glutamate 5-semialdehyde and phosphate. The product spontaneously undergoes cyclization to form 1-pyrroline-5-carboxylate. The polypeptide is Probable gamma-glutamyl phosphate reductase (pro1) (Schizosaccharomyces pombe (strain 972 / ATCC 24843) (Fission yeast)).